A 74-amino-acid polypeptide reads, in one-letter code: ATP synthase subunit 9, mitochondrial (74 aa).

2 helical membrane passes run 8-28 and 50-70; these read IGAGAATIASAGAAIGIGNVF and ILGFALTEAIALFAPMMAFLI.

The protein belongs to the ATPase C chain family. F-type ATPases have 2 components, CF(1) - the catalytic core - and CF(0) - the membrane proton channel. CF(1) has five subunits: alpha(3), beta(3), gamma(1), delta(1), epsilon(1). CF(0) has three main subunits: a, b and c.

It localises to the mitochondrion membrane. Functionally, this protein is one of the chains of the nonenzymatic membrane component (F0) of mitochondrial ATPase. This is ATP synthase subunit 9, mitochondrial (ATP9) from Brassica napus (Rape).